A 106-amino-acid chain; its full sequence is L-rhamnose mutarotase (106 aa).

Residue Y20 coordinates substrate. H24 functions as the Proton donor in the catalytic mechanism. Substrate is bound by residues Y43 and 78-79 (WW).

The protein belongs to the rhamnose mutarotase family. In terms of assembly, homodimer.

Its subcellular location is the cytoplasm. It catalyses the reaction alpha-L-rhamnose = beta-L-rhamnose. It participates in carbohydrate metabolism; L-rhamnose metabolism. In terms of biological role, involved in the anomeric conversion of L-rhamnose. In Rhizobium johnstonii (strain DSM 114642 / LMG 32736 / 3841) (Rhizobium leguminosarum bv. viciae), this protein is L-rhamnose mutarotase.